The following is a 310-amino-acid chain: 4-hydroxythreonine-4-phosphate dehydrogenase (310 aa).

Substrate is bound at residue T129. A divalent metal cation-binding residues include H158, H202, and H250. Positions 258, 267, and 276 each coordinate substrate.

It belongs to the PdxA family. In terms of assembly, homodimer. A divalent metal cation is required as a cofactor.

The protein resides in the cytoplasm. The enzyme catalyses 4-(phosphooxy)-L-threonine + NAD(+) = 3-amino-2-oxopropyl phosphate + CO2 + NADH. The protein operates within cofactor biosynthesis; pyridoxine 5'-phosphate biosynthesis; pyridoxine 5'-phosphate from D-erythrose 4-phosphate: step 4/5. In terms of biological role, catalyzes the NAD(P)-dependent oxidation of 4-(phosphooxy)-L-threonine (HTP) into 2-amino-3-oxo-4-(phosphooxy)butyric acid which spontaneously decarboxylates to form 3-amino-2-oxopropyl phosphate (AHAP). The protein is 4-hydroxythreonine-4-phosphate dehydrogenase of Hydrogenobaculum sp. (strain Y04AAS1).